The primary structure comprises 124 residues: Phosphoribosyl-ATP pyrophosphatase (124 aa).

The protein belongs to the PRA-PH family.

It localises to the cytoplasm. The enzyme catalyses 1-(5-phospho-beta-D-ribosyl)-ATP + H2O = 1-(5-phospho-beta-D-ribosyl)-5'-AMP + diphosphate + H(+). It participates in amino-acid biosynthesis; L-histidine biosynthesis; L-histidine from 5-phospho-alpha-D-ribose 1-diphosphate: step 2/9. This is Phosphoribosyl-ATP pyrophosphatase (hisE) from Ralstonia nicotianae (strain ATCC BAA-1114 / GMI1000) (Ralstonia solanacearum).